The chain runs to 528 residues: Poly(A) RNA polymerase GLD2 (528 aa).

Disordered regions lie at residues 1-41 (MYPN…QPQQ) and 99-121 (RDQSPLISPASPSSSFQNRKRRS). 2 stretches are compositionally biased toward low complexity: residues 16–32 (PCEQQQPPLEQSQEQPL) and 102–113 (SPLISPASPSSS). The Mg(2+) site is built by Asp-259 and Asp-261. Residues 428–481 (LGDLLLGFLKYFAIEFDWSKDIISVREAKALPRSDDYEWRNKFICVEEPYDRTN) enclose the PAP-associated domain.

It belongs to the DNA polymerase type-B-like family. GLD2 subfamily. In terms of assembly, component of a complex at least composed of cpeb1, cpsf1, tent2/gld2, pabpc1/ePAB, parn and sympk. Following oocyte maturation, parn is expelled from the complex. Interacts with rbm9 and sympk. It depends on Mg(2+) as a cofactor. Requires Mn(2+) as cofactor.

It is found in the cytoplasm. The catalysed reaction is RNA(n) + ATP = RNA(n)-3'-adenine ribonucleotide + diphosphate. Functionally, cytoplasmic poly(A) RNA polymerase that adds successive AMP monomers to the 3'-end of specific RNAs, forming a poly(A) tail. In contrast to the canonical nuclear poly(A) RNA polymerase, it only adds poly(A) to selected cytoplasmic mRNAs during oocyte maturation. Plays a central role during oocyte maturation by mediating polyadenylation of dormant mRNAs, which contain 5'AAUAAA-3' sequence in their 3'-UTR. In immature oocytes, polyadenylation of poly(A) tails is counteracted by the ribonuclease parn. During maturation parn is excluded from the ribonucleoprotein complex, allowing poly(A) elongation and activation of mRNAs. May not play a role in replication-dependent histone mRNA degradation. This is Poly(A) RNA polymerase GLD2 (tent2) from Xenopus tropicalis (Western clawed frog).